The chain runs to 491 residues: Trypanothione reductase (491 aa).

An FAD-binding site is contributed by 35–52; it reads DVQATHGPPALVALGGTC. C52 and C57 form a disulfide bridge. H461 functions as the Proton acceptor in the catalytic mechanism.

It belongs to the class-I pyridine nucleotide-disulfide oxidoreductase family. Homodimer. FAD serves as cofactor.

The protein resides in the cytoplasm. The catalysed reaction is trypanothione + NADP(+) = trypanothione disulfide + NADPH + H(+). Its function is as follows. Trypanothione is the parasite analog of glutathione; this enzyme is the equivalent of glutathione reductase. In Leishmania donovani, this protein is Trypanothione reductase (TPR).